Consider the following 57-residue polypeptide: Large ribosomal subunit protein bL32 (57 aa).

It belongs to the bacterial ribosomal protein bL32 family.

This is Large ribosomal subunit protein bL32 (rpmF) from Halalkalibacterium halodurans (strain ATCC BAA-125 / DSM 18197 / FERM 7344 / JCM 9153 / C-125) (Bacillus halodurans).